The chain runs to 579 residues: Glutamine--tRNA ligase (579 aa).

Residues 41–51 (PEPNGYLHIGH) carry the 'HIGH' region motif. Residues 42-44 (EPN) and 48-54 (HIGHAKA) each bind ATP. 2 residues coordinate L-glutamine: aspartate 74 and tyrosine 218. Residues threonine 237, 285 to 286 (RL), and 293 to 295 (MSK) contribute to the ATP site. Residues 292-296 (VMSKR) carry the 'KMSKS' region motif.

The protein belongs to the class-I aminoacyl-tRNA synthetase family. Monomer.

Its subcellular location is the cytoplasm. The enzyme catalyses tRNA(Gln) + L-glutamine + ATP = L-glutaminyl-tRNA(Gln) + AMP + diphosphate. The polypeptide is Glutamine--tRNA ligase (Xanthomonas oryzae pv. oryzae (strain MAFF 311018)).